The sequence spans 272 residues: D-aminoacyl-tRNA deacylase (272 aa).

This sequence belongs to the DtdA deacylase family. Monomer. Zn(2+) is required as a cofactor.

The enzyme catalyses a D-aminoacyl-tRNA + H2O = a tRNA + a D-alpha-amino acid + H(+). It carries out the reaction glycyl-tRNA(Ala) + H2O = tRNA(Ala) + glycine + H(+). Its function is as follows. D-aminoacyl-tRNA deacylase with broad substrate specificity. By recycling D-aminoacyl-tRNA to D-amino acids and free tRNA molecules, this enzyme counteracts the toxicity associated with the formation of D-aminoacyl-tRNA entities in vivo. The polypeptide is D-aminoacyl-tRNA deacylase (Thermococcus kodakarensis (strain ATCC BAA-918 / JCM 12380 / KOD1) (Pyrococcus kodakaraensis (strain KOD1))).